Consider the following 455-residue polypeptide: Hydroxymethylglutaryl-CoA synthase 2 (455 aa).

The Proton donor/acceptor role is filled by E86. Residue C120 is the Acyl-thioester intermediate of the active site. The (3S)-3-hydroxy-3-methylglutaryl-CoA site is built by C120, T161, S211, H255, K264, N329, and S363. H255 serves as the catalytic Proton donor/acceptor.

It belongs to the thiolase-like superfamily. HMG-CoA synthase family.

The catalysed reaction is acetoacetyl-CoA + acetyl-CoA + H2O = (3S)-3-hydroxy-3-methylglutaryl-CoA + CoA + H(+). It functions in the pathway metabolic intermediate biosynthesis; (R)-mevalonate biosynthesis; (R)-mevalonate from acetyl-CoA: step 2/3. This enzyme condenses acetyl-CoA with acetoacetyl-CoA to form HMG-CoA, which is the substrate for HMG-CoA reductase. The chain is Hydroxymethylglutaryl-CoA synthase 2 (HMGCS-2) from Blattella germanica (German cockroach).